Consider the following 697-residue polypeptide: Sialidase B (697 aa).

The signal sequence occupies residues 1 to 29 (MNKRGLYSKLGISVVGISLLMGVPTLIHA). Residue arginine 245 participates in substrate binding. Aspartate 270 (proton acceptor) is an active-site residue. BNR repeat units follow at residues 280-291 (SYSDDNGKTWSE), 462-473 (TTSQNRGESWEQ), and 517-528 (LISDDSGQTWKK). Residue glutamate 541 is part of the active site. Arginine 557 provides a ligand contact to substrate. The stretch at 566-577 (MTSRDSGETWSK) is one BNR 4 repeat. Arginine 619 serves as a coordination point for substrate. The active-site Nucleophile is the tyrosine 653.

This sequence belongs to the glycosyl hydrolase 33 family.

The catalysed reaction is Hydrolysis of alpha-(2-&gt;3)-, alpha-(2-&gt;6)-, alpha-(2-&gt;8)- glycosidic linkages of terminal sialic acid residues in oligosaccharides, glycoproteins, glycolipids, colominic acid and synthetic substrates.. This is Sialidase B (nanB) from Streptococcus pneumoniae serotype 4 (strain ATCC BAA-334 / TIGR4).